We begin with the raw amino-acid sequence, 265 residues long: Tryptophan synthase alpha chain (265 aa).

Active-site proton acceptor residues include Glu-49 and Asp-60.

The protein belongs to the TrpA family. As to quaternary structure, tetramer of two alpha and two beta chains.

The enzyme catalyses (1S,2R)-1-C-(indol-3-yl)glycerol 3-phosphate + L-serine = D-glyceraldehyde 3-phosphate + L-tryptophan + H2O. Its pathway is amino-acid biosynthesis; L-tryptophan biosynthesis; L-tryptophan from chorismate: step 5/5. Its function is as follows. The alpha subunit is responsible for the aldol cleavage of indoleglycerol phosphate to indole and glyceraldehyde 3-phosphate. The protein is Tryptophan synthase alpha chain of Cupriavidus taiwanensis (strain DSM 17343 / BCRC 17206 / CCUG 44338 / CIP 107171 / LMG 19424 / R1) (Ralstonia taiwanensis (strain LMG 19424)).